The chain runs to 137 residues: Nucleoside diphosphate kinase (137 aa).

Residues Lys9, Phe57, Arg85, Thr91, Arg102, and Asn112 each coordinate ATP. His115 acts as the Pros-phosphohistidine intermediate in catalysis.

This sequence belongs to the NDK family. As to quaternary structure, homotetramer. Mg(2+) serves as cofactor.

The protein resides in the cytoplasm. It carries out the reaction a 2'-deoxyribonucleoside 5'-diphosphate + ATP = a 2'-deoxyribonucleoside 5'-triphosphate + ADP. The enzyme catalyses a ribonucleoside 5'-diphosphate + ATP = a ribonucleoside 5'-triphosphate + ADP. Its function is as follows. Major role in the synthesis of nucleoside triphosphates other than ATP. The ATP gamma phosphate is transferred to the NDP beta phosphate via a ping-pong mechanism, using a phosphorylated active-site intermediate. This chain is Nucleoside diphosphate kinase, found in Sulfurovum sp. (strain NBC37-1).